Here is a 464-residue protein sequence, read N- to C-terminus: RCC1-like G exchanging factor-like protein (464 aa).

The N-terminal 37 residues, 1–37 (MALVALVAGARLGRRLSGPGLGRGHWTAAGRSRSRRE), are a transit peptide targeting the mitochondrion. RCC1 repeat units lie at residues 58–124 (ADRV…LSSK), 128–191 (VTKV…VLTD), 193–247 (EGVF…FLTD), 248–300 (KGEV…AVSA), 302–353 (GGLF…VLNG), 354–411 (EGHV…ALTN), and 412–461 (KGEL…TLAK).

As to quaternary structure, forms a regulatory protein-RNA complex, consisting of RCC1L, NGRN, RPUSD3, RPUSD4, TRUB2, FASTKD2 and 16S mt-rRNA. Interacts with 16S mt-rRNA; this interaction is direct. Interacts with OPA1; this interaction is direct. In terms of assembly, asociates with the mitochondrial ribosome large subunit (mt-LSU). Asociates with the mitochondrial ribosome small subunit (mt-SSU). In terms of tissue distribution, ubiquitous.

It is found in the mitochondrion membrane. The protein localises to the mitochondrion inner membrane. In terms of biological role, guanine nucleotide exchange factor (GEF) for mitochondrial dynamin-related GTPase OPA1. Activates OPA1, by exchanging bound GDP for free GTP, and drives OPA1 and MFN1-dependent mitochondrial fusion. Plays an essential role in mitochondrial ribosome biogenesis. As a component of a functional protein-RNA module, consisting of RCC1L, NGRN, RPUSD3, RPUSD4, TRUB2, FASTKD2 and 16S mitochondrial ribosomal RNA (16S mt-rRNA), controls 16S mt-rRNA abundance and is required for intra-mitochondrial translation of core subunits of the oxidative phosphorylation system. Its function is as follows. Plays an essential role in mitochondrial ribosome biogenesis via its association with GTPases that play a role in the assembly of the large ribosome subunit. Functionally, plays an essential role in mitochondrial ribosome biogenesis via its association with GTPases that play a role in the assembly of the small ribosome subunit. The chain is RCC1-like G exchanging factor-like protein from Homo sapiens (Human).